Here is a 203-residue protein sequence, read N- to C-terminus: Probable chemoreceptor glutamine deamidase CheD (203 aa).

It belongs to the CheD family.

The catalysed reaction is L-glutaminyl-[protein] + H2O = L-glutamyl-[protein] + NH4(+). Probably deamidates glutamine residues to glutamate on methyl-accepting chemotaxis receptors (MCPs), playing an important role in chemotaxis. The protein is Probable chemoreceptor glutamine deamidase CheD of Herminiimonas arsenicoxydans.